Reading from the N-terminus, the 214-residue chain is NAD(P)H-quinone oxidoreductase subunit 5, chloroplastic (214 aa).

Transmembrane regions (helical) follow at residues 84 to 104 (LFPLLILLLFTFFIGFIGIPF) and 152 to 172 (SLAILGLFIAYIFYGSAYSFF).

Belongs to the complex I subunit 5 family. As to quaternary structure, NDH is composed of at least 16 different subunits, 5 of which are encoded in the nucleus.

It localises to the plastid. The protein localises to the chloroplast thylakoid membrane. The enzyme catalyses a plastoquinone + NADH + (n+1) H(+)(in) = a plastoquinol + NAD(+) + n H(+)(out). It catalyses the reaction a plastoquinone + NADPH + (n+1) H(+)(in) = a plastoquinol + NADP(+) + n H(+)(out). Functionally, NDH shuttles electrons from NAD(P)H:plastoquinone, via FMN and iron-sulfur (Fe-S) centers, to quinones in the photosynthetic chain and possibly in a chloroplast respiratory chain. The immediate electron acceptor for the enzyme in this species is believed to be plastoquinone. Couples the redox reaction to proton translocation, and thus conserves the redox energy in a proton gradient. The protein is NAD(P)H-quinone oxidoreductase subunit 5, chloroplastic (ndhF) of Brachypodium sylvaticum (False brome).